Reading from the N-terminus, the 244-residue chain is Small ribosomal subunit protein uS3 (244 aa).

The 69-residue stretch at 38–106 folds into the KH type-2 domain; it reads IRKYLNARLA…EVQINIFEVK (69 aa). Over residues 222 to 235 the composition is skewed to basic and acidic residues; it reads TGRRNDNAGGNRDK. Positions 222-244 are disordered; it reads TGRRNDNAGGNRDKNFKRKRANR.

This sequence belongs to the universal ribosomal protein uS3 family. Part of the 30S ribosomal subunit. Forms a tight complex with proteins S10 and S14.

Its function is as follows. Binds the lower part of the 30S subunit head. Binds mRNA in the 70S ribosome, positioning it for translation. This chain is Small ribosomal subunit protein uS3, found in Parabacteroides distasonis (strain ATCC 8503 / DSM 20701 / CIP 104284 / JCM 5825 / NCTC 11152).